A 2801-amino-acid chain; its full sequence is Neurobeachin-like protein 2 (2801 aa).

Residues 1379–1529 are disordered; it reads RHEEEYEEEE…TISNTSNPQA (151 aa). The segment covering 1383–1393 has biased composition (acidic residues); it reads EYEEEEGETQD. Composition is skewed to polar residues over residues 1400–1413, 1424–1437, 1470–1481, and 1500–1528; these read DLSQ…QLKN, GDQS…SNTV, KGPQTPVGSQPE, and SSSL…SNPQ. Residues 1986–2086 enclose the BEACH-type PH domain; it reads SQKEKLVLSE…VRNKVYSRIL (101 aa). Residues 2099–2391 enclose the BEACH domain; it reads RSPQELLKAS…QLLKEPHPPR (293 aa). WD repeat units lie at residues 2431–2468, 2492–2535, 2538–2575, 2588–2626, 2633–2676, 2684–2719, and 2727–2762; these read LVQA…SWLP, RFLS…MLGK, LVGR…VWQV, RPIQ…VHSV, WTLR…RYAL, TLLA…IRDL, and APLA…VGAG.

This sequence belongs to the WD repeat neurobeachin family.

The protein localises to the endoplasmic reticulum. Its function is as follows. Involved in thrombopoiesis. Plays a role in the development or secretion of alpha-granules, that contain several growth factors important for platelet biogenesis. This Danio rerio (Zebrafish) protein is Neurobeachin-like protein 2 (nbeal2).